A 165-amino-acid chain; its full sequence is Endoribonuclease YbeY (165 aa).

The Zn(2+) site is built by His-119, His-123, and His-129.

Belongs to the endoribonuclease YbeY family. The cofactor is Zn(2+).

The protein resides in the cytoplasm. In terms of biological role, single strand-specific metallo-endoribonuclease involved in late-stage 70S ribosome quality control and in maturation of the 3' terminus of the 16S rRNA. This chain is Endoribonuclease YbeY, found in Streptomyces coelicolor (strain ATCC BAA-471 / A3(2) / M145).